We begin with the raw amino-acid sequence, 439 residues long: Glutamyl-tRNA reductase (439 aa).

Substrate-binding positions include 46-49 (TCNR), S111, 116-118 (EGE), and Q122. C47 functions as the Nucleophile in the catalytic mechanism. Position 191 to 196 (191 to 196 (GTGAYA)) interacts with NADP(+).

Belongs to the glutamyl-tRNA reductase family. In terms of assembly, homodimer.

It catalyses the reaction (S)-4-amino-5-oxopentanoate + tRNA(Glu) + NADP(+) = L-glutamyl-tRNA(Glu) + NADPH + H(+). It functions in the pathway porphyrin-containing compound metabolism; protoporphyrin-IX biosynthesis; 5-aminolevulinate from L-glutamyl-tRNA(Glu): step 1/2. In terms of biological role, catalyzes the NADPH-dependent reduction of glutamyl-tRNA(Glu) to glutamate 1-semialdehyde (GSA). The sequence is that of Glutamyl-tRNA reductase from Clavibacter michiganensis subsp. michiganensis (strain NCPPB 382).